The sequence spans 313 residues: PDZ domain-containing protein GIPC2 (313 aa).

Residues 14–27 (KETSRLVEGEHTDA) are compositionally biased toward basic and acidic residues. The disordered stretch occupies residues 14-34 (KETSRLVEGEHTDAAVRSLPS). The 81-residue stretch at 117 to 197 (EVNVYKSEDS…EELFTLTLIE (81 aa)) folds into the PDZ domain.

It belongs to the GIPC family. In terms of assembly, probably interacts with SEMA5A.

It localises to the cytoplasm. This Bos taurus (Bovine) protein is PDZ domain-containing protein GIPC2 (GIPC2).